The sequence spans 428 residues: Serine--tRNA ligase (428 aa).

L-serine is bound at residue Thr231 to Glu233. ATP-binding positions include Arg262–Glu264 and Val278. Residue Glu285 participates in L-serine binding. An ATP-binding site is contributed by Glu349–Ser352. Thr384 serves as a coordination point for L-serine.

It belongs to the class-II aminoacyl-tRNA synthetase family. Type-1 seryl-tRNA synthetase subfamily. As to quaternary structure, homodimer. The tRNA molecule binds across the dimer.

The protein localises to the cytoplasm. The catalysed reaction is tRNA(Ser) + L-serine + ATP = L-seryl-tRNA(Ser) + AMP + diphosphate + H(+). The enzyme catalyses tRNA(Sec) + L-serine + ATP = L-seryl-tRNA(Sec) + AMP + diphosphate + H(+). The protein operates within aminoacyl-tRNA biosynthesis; selenocysteinyl-tRNA(Sec) biosynthesis; L-seryl-tRNA(Sec) from L-serine and tRNA(Sec): step 1/1. Functionally, catalyzes the attachment of serine to tRNA(Ser). Is also able to aminoacylate tRNA(Sec) with serine, to form the misacylated tRNA L-seryl-tRNA(Sec), which will be further converted into selenocysteinyl-tRNA(Sec). The protein is Serine--tRNA ligase of Bifidobacterium longum (strain DJO10A).